We begin with the raw amino-acid sequence, 493 residues long: Cardiolipin synthase 1 (493 aa).

2 consecutive transmembrane segments (helical) span residues F13–F33 and W45–F65. PLD phosphodiesterase domains follow at residues M228 to Y255 and E406 to S433. Residues H233, K235, D240, H411, K413, and D418 contribute to the active site.

The protein belongs to the phospholipase D family. Cardiolipin synthase subfamily.

It localises to the cell membrane. It catalyses the reaction 2 a 1,2-diacyl-sn-glycero-3-phospho-(1'-sn-glycerol) = a cardiolipin + glycerol. Catalyzes the reversible phosphatidyl group transfer from one phosphatidylglycerol molecule to another to form cardiolipin (CL) (diphosphatidylglycerol) and glycerol. In Staphylococcus aureus (strain MRSA252), this protein is Cardiolipin synthase 1 (cls1).